Reading from the N-terminus, the 701-residue chain is Pentatricopeptide repeat-containing protein At5g50390, chloroplastic (701 aa).

The transit peptide at 1–47 (MEIPLSRYQSIRLDEIRDSSSNPKVLTFPRKFSLRGRRWKNPFGRLS) directs the protein to the chloroplast. 12 PPR repeats span residues 86 to 116 (SGVT…LEIR), 122 to 156 (GVST…GFEP), 157 to 187 (EQYM…IPER), 188 to 218 (NLYS…MWEE), 223 to 257 (ETHT…GVVD), 258 to 288 (NTFV…MPEK), 289 to 323 (TTVA…GVSI), 324 to 358 (DQFT…GFES), 359 to 389 (EIVA…LPRK), 390 to 424 (NIIS…NVAP), 425 to 460 (NHVT…GIKP), and 461 to 491 (RAMH…APLK). Positions 496 to 571 (MWAALLNACR…MPACTWVEVG (76 aa)) are type E motif. The segment at 572 to 606 (DQTHSFLSGDRFDSYNETVKRQIYQKVDELMEEIS) is type E(+) motif; degenerate. The type DYW motif stretch occupies residues 607–701 (EYGYSEEEQH…EGKCSCGGYW (95 aa)).

The protein belongs to the PPR family. PCMP-H subfamily.

It is found in the plastid. Its subcellular location is the chloroplast. This Arabidopsis thaliana (Mouse-ear cress) protein is Pentatricopeptide repeat-containing protein At5g50390, chloroplastic (PCMP-H58).